We begin with the raw amino-acid sequence, 663 residues long: Polyunsaturated fatty acid lipoxygenase ALOX15 (663 aa).

The region spanning 2 to 115 (GLYRVRVSTG…ILSLPEGTGR (114 aa)) is the PLAT domain. Positions 116–663 (TVVDDPQGLF…PSLVENSVAI (548 aa)) constitute a Lipoxygenase domain. Fe cation is bound by residues H361, H366, H541, H545, and I663.

The protein belongs to the lipoxygenase family. Interacts with PEBP1; in response to IL13/interleukin-13, prevents the interaction of PEBP1 with RAF1 to activate the ERK signaling cascade. Requires Fe cation as cofactor. As to expression, detected in tracheal epithelium.

Its subcellular location is the cytoplasm. It is found in the cytosol. The protein resides in the cell membrane. It localises to the lipid droplet. The enzyme catalyses (5Z,8Z,11Z,14Z)-eicosatetraenoate + O2 = (12S)-hydroperoxy-(5Z,8Z,10E,14Z)-eicosatetraenoate. The catalysed reaction is (5Z,8Z,11Z,14Z)-eicosatetraenoate + O2 = (15S)-hydroperoxy-(5Z,8Z,11Z,13E)-eicosatetraenoate. It carries out the reaction (9Z,12Z)-octadecadienoate + O2 = (13S)-hydroperoxy-(9Z,11E)-octadecadienoate. It catalyses the reaction (5Z,8Z,11Z,14Z)-eicosatetraenoate + 2 O2 = (14R,15S)-dihydroperoxy-(5Z,8Z,10E,12E)-eicosatetraenoate. The enzyme catalyses (5Z,8Z,11Z,14Z)-eicosatetraenoate + 2 O2 = (8S,15S)-dihydroperoxy-(5Z,9E,11Z,13E)-eicosatetraenoate. The catalysed reaction is (14S,15R)-epoxy-(5Z,8Z,11Z)-eicosatrienoate + O2 = (8S)-hydroperoxy-(14S,15R)-epoxy-(5Z,9E,11Z)-eicosatrienoate. It carries out the reaction (14S,15R)-epoxy-(5Z,8Z,11Z)-eicosatrienoate + O2 = (12S)-hydroperoxy-(14S,15R)-epoxy-(5Z,8Z,10E)-eicosatrienoate. It catalyses the reaction (14R,15S)-epoxy-(5Z,8Z,11Z)-eicosatrienoate + O2 = (5S)-hydroperoxy-(14R,15S)-epoxy-(6E,8Z,11Z)-eicosatrienoate. The enzyme catalyses (14R,15S)-epoxy-(5Z,8Z,11Z)-eicosatrienoate + O2 = (12S)-hydroperoxy-(14R,15S)-epoxy-(5Z,8Z,10E)-eicosatrienoate. The catalysed reaction is (15R)-hydroperoxy-(5Z,8Z,11Z,13E)-eicosatetraenoate = 15-oxo-(5Z,8Z,11Z,13E)-eicosatetraenoate + H2O. It carries out the reaction (15S)-hydroperoxy-(5Z,8Z,11Z,13E)-eicosatetraenoate = (14S,15S)-epoxy-(5Z,8Z,10E,12E)-eicosatetraenoate + H2O. It catalyses the reaction (12S)-hydroperoxy-(5Z,8Z,10E,14Z)-eicosatetraenoate = (8S)-hydroxy-(11S,12S)-epoxy-(5Z,9E,14Z)-eicosatrienoate. The enzyme catalyses (4Z,7Z,10Z,13Z,16Z)-docosapentaenoate + O2 = 14-hydroperoxy-(4Z,7Z,10Z,12E,16Z)-docosapentaenoate. The catalysed reaction is (7Z,10Z,13Z,16Z,19Z)-docosapentaenoate + O2 = 14-hydroperoxy-(7Z,10Z,12E,16Z,19Z)-docosapentaenoate. It carries out the reaction (4Z,7Z,10Z,13Z,16Z,19Z)-docosahexaenoate + O2 = (14S)-hydroperoxy-(4Z,7Z,10Z,12E,16Z,19Z)-docosahexaenoate. It catalyses the reaction (4Z,7Z,10Z,13Z,16Z,19Z)-docosahexaenoate + O2 = (17S)-hydroperoxy-(4Z,7Z,10Z,13Z,15E,19Z)-docosahexaenoate. The enzyme catalyses (7S)-hydroperoxy-(4Z,8E,10Z,13Z,16Z,19Z)-docosahexaenoate + O2 = (7S,14S)-dihydroperoxy-(4Z,8E,10Z,12E,16Z,19Z)-docosahexaenoate. The catalysed reaction is (7S)-hydroperoxy-(4Z,8E,10Z,13Z,16Z,19Z)-docosahexaenoate + O2 = (7S,17S)-dihydroperoxy-(4Z,8E,10Z,13Z,15E,19Z)-docosahexaenoate. It carries out the reaction (4Z,7Z,10Z,13Z,16Z,19Z)-docosahexaenoate + O2 = (11S)-hydroperoxy-(4Z,7Z,9E,13Z,16Z,19Z)-docosahexaenoate. It catalyses the reaction N-(5Z,8Z,11Z,14Z)-eicosatetraenoyl-taurine + O2 = N-(12S)-hydroperoxy-(5Z,8Z,10E,14Z)-eicosatetraenoyl-taurine. The enzyme catalyses N-(5Z,8Z,11Z,14Z)-eicosatetraenoyl-gamma-aminobutanoate + O2 = N-(12S)-hydroperoxy-(5Z,8Z,10E,14Z)-eicosatetraenoyl-gamma-aminobutanoate. The catalysed reaction is N-(5Z,8Z,11Z,14Z)-eicosatetraenoyl-glycine + O2 = N-(12S)-hydroperoxy-(5Z,8Z,10E,14Z)-eicosatetraenoyl-glycine. It carries out the reaction N-(5Z,8Z,11Z,14Z)-eicosatetraenoyl-L-alanine + O2 = N-(12S)-hydroperoxy-(5Z,8Z,10E,14Z)-eicosatetraenoyl-alanine. It catalyses the reaction N-(5Z,8Z,11Z,14Z)-eicosatetraenoyl-taurine + O2 = N-(15S)-hydroperoxy-(5Z,8Z,11Z,13E)-eicosatetraenoyl-taurine. The enzyme catalyses N-(5Z,8Z,11Z,14Z)-eicosatetraenoyl-gamma-aminobutanoate + O2 = N-(15S)-hydroperoxy-(5Z,8Z,11Z,13E)-eicosatetraenoyl-gamma-aminobutanoate. The catalysed reaction is N-(5Z,8Z,11Z,14Z)-eicosatetraenoyl-glycine + O2 = N-(15S)-hydroperoxy-(5Z,8Z,11Z,13E)-eicosatetraenoyl-glycine. It carries out the reaction N-(5Z,8Z,11Z,14Z)-eicosatetraenoyl-L-alanine + O2 = N-(15S)-hydroperoxy-(5Z,8Z,11Z,13E)-eicosatetraenoyl-alanine. It functions in the pathway lipid metabolism; hydroperoxy eicosatetraenoic acid biosynthesis. Its function is as follows. Non-heme iron-containing dioxygenase that catalyzes the stereo-specific peroxidation of free and esterified polyunsaturated fatty acids generating a spectrum of bioactive lipid mediators. It inserts peroxyl groups at C12 or C15 of arachidonate ((5Z,8Z,11Z,14Z)-eicosatetraenoate) producing both 12-hydroperoxyeicosatetraenoate/12-HPETE and 15-hydroperoxyeicosatetraenoate/15-HPETE. It may then act on 12-HPETE to produce hepoxilins, which may show pro-inflammatory properties. Can also peroxidize linoleate ((9Z,12Z)-octadecadienoate) to 13-hydroperoxyoctadecadienoate. May participate in the sequential oxidations of DHA ((4Z,7Z,10Z,13Z,16Z,19Z)-docosahexaenoate) to generate specialized pro-resolving mediators (SPMs)like resolvin D5 ((7S,17S)-diHPDHA) and (7S,14S)-diHPDHA, that actively down-regulate the immune response and have anti-aggregation properties with platelets. Can convert epoxy fatty acids to hydroperoxy-epoxides derivatives followed by an intramolecular nucleophilic substitution leading to the formation of monocyclic endoperoxides. Plays an important role during the maintenance of self-tolerance by peroxidizing membrane-bound phosphatidylethanolamine which can then signal the sorting process for clearance of apoptotic cells during inflammation and prevent an autoimmune response. In addition to its role in the immune and inflammatory responses, this enzyme may play a role in epithelial wound healing in the cornea through production of lipoxin A4 (LXA(4)) and docosahexaenoic acid-derived neuroprotectin D1 (NPD1; 10R,17S-HDHA), both lipid autacoids exhibit anti-inflammatory and neuroprotective properties. Furthermore, it may regulate actin polymerization which is crucial for several biological processes such as the phagocytosis of apoptotic cells. It is also implicated in the generation of endogenous ligands for peroxisome proliferator activated receptor (PPAR-gamma), hence modulating macrophage development and function. It may also exert a negative effect on skeletal development by regulating bone mass through this pathway. As well as participates in ER stress and downstream inflammation in adipocytes, pancreatic islets, and liver. Finally, it is also involved in the cellular response to IL13/interleukin-13. In Bos taurus (Bovine), this protein is Polyunsaturated fatty acid lipoxygenase ALOX15.